The primary structure comprises 529 residues: MQACCGGNSMASLQQPGRVQGSVFPPIMPPVTKFSQQLKFNISKPFRSSFLKRNLVSEMRASSVSLPNVEISSKEIPFEDYGLGEVDPEVRTIITKEKDRQFRSLELIASENFTSRAVMEAVGSCLTNKYSEGLPGKRYYGGNEYIDQLETLCQNRALAAFRLDSTKWGVNVQPLSGSPANFAVYTAILSPHDRIMGLDLPHGGHLSHGFMTAKRRVSGTSIYFESMPYRLDESTGIVDYDMLEKTATLFRPKLIIAGASAYSRDFDYPRMRKIADSVGAFLMMDMAHISGLVAASVVADPFEYCDIVTTTTHKSLRGPRGGMIFFRKDPINGVDLESAVNNAVFPGLQGGPHNHTIGGLAVCLKHAQSPEFKAYQKRVVSNCRALANRLVELGFKLVSGGSDNHLVLVDLRPMGMDGARVEKILDMASITLNKNSVPGDKSALVPGGIRIGSPAMTTRGLSEKDFVVVADFIKEGVEITMEAKKAAPGSKLQDFNKFVTSPEFPLKERVKSLKERVETFTSRFPIPGV.

The transit peptide at 1–60 (MQACCGGNSMASLQQPGRVQGSVFPPIMPPVTKFSQQLKFNISKPFRSSFLKRNLVSEMR) directs the protein to the chloroplast. An N6-(pyridoxal phosphate)lysine modification is found at Lys314.

This sequence belongs to the SHMT family. As to quaternary structure, homotetramer. It depends on pyridoxal 5'-phosphate as a cofactor.

It is found in the plastid. The protein resides in the chloroplast. The catalysed reaction is (6R)-5,10-methylene-5,6,7,8-tetrahydrofolate + glycine + H2O = (6S)-5,6,7,8-tetrahydrofolate + L-serine. Its pathway is one-carbon metabolism; tetrahydrofolate interconversion. With respect to regulation, inhibited by 5-CH3-H4PteGlu1/5 and 5-HCO-H4PteGlu1/5 in vitro. Catalyzes the interconversion of serine and glycine and directs the hydroxymethyl moiety of serine into the metabolic network of H4PteGlu(n)-bound one-carbon units. The chain is Serine hydroxymethyltransferase 3, chloroplastic from Arabidopsis thaliana (Mouse-ear cress).